Here is an 872-residue protein sequence, read N- to C-terminus: DNA polymerase 1 (872 aa).

It belongs to the DNA polymerase type-B family.

It carries out the reaction DNA(n) + a 2'-deoxyribonucleoside 5'-triphosphate = DNA(n+1) + diphosphate. The polypeptide is DNA polymerase 1 (pol-alpha) (Sulfurisphaera ohwakuensis).